A 415-amino-acid chain; its full sequence is Sucrose permease (415 aa).

The Cytoplasmic portion of the chain corresponds to M1–S16. Residues S17 to L37 traverse the membrane as a helical segment. The Periplasmic portion of the chain corresponds to K38 to L48. The chain crosses the membrane as a helical span at residues G49–V69. The Cytoplasmic segment spans residues Q70–K77. Residues P78–Y98 form a helical membrane-spanning segment. Topologically, residues E99–S107 are periplasmic. The helical transmembrane segment at V108–L128 threads the bilayer. Over D129 to R147 the chain is Cytoplasmic. A helical membrane pass occupies residues A148–I167. The Periplasmic segment spans residues S168 to H170. Residues I171–F190 form a helical membrane-spanning segment. Over K191–W220 the chain is Cytoplasmic. Residues V221–F241 traverse the membrane as a helical segment. Residues P242–G260 are Periplasmic-facing. The helical transmembrane segment at Y261 to V281 threads the bilayer. At N282–K287 the chain is on the cytoplasmic side. A helical transmembrane segment spans residues N288 to V308. Residues N309–W311 lie on the Periplasmic side of the membrane. A helical transmembrane segment spans residues I312–F332. The Cytoplasmic segment spans residues K333–R342. A helical membrane pass occupies residues L343–L363. At S364 to Q377 the chain is on the periplasmic side. A helical transmembrane segment spans residues T378–L398. Over S399–I415 the chain is Cytoplasmic.

Belongs to the major facilitator superfamily. Oligosaccharide:H(+) symporter (OHS) (TC 2.A.1.5) family.

It is found in the cell inner membrane. It functions in the pathway glycan biosynthesis; sucrose metabolism. In terms of biological role, responsible for transport of sucrose into the cell, with the concomitant import of a proton (symport system). Can also transport maltose, fructose or lactulose, but not glucose, lactose or melibiose. The substrate specificity is directed toward the fructofuranosyl moiety of the substrate. In Escherichia coli, this protein is Sucrose permease.